A 644-amino-acid chain; its full sequence is Exoribonuclease 2 (644 aa).

The 328-residue stretch at 189 to 516 (REDLTALDFV…NHRLLKAVIK (328 aa)) folds into the RNB domain. One can recognise an S1 motif domain in the interval 561 to 643 (DTRFAAEIVD…ETRSIIARPV (83 aa)).

Belongs to the RNR ribonuclease family. RNase II subfamily.

It is found in the cytoplasm. The enzyme catalyses Exonucleolytic cleavage in the 3'- to 5'-direction to yield nucleoside 5'-phosphates.. In terms of biological role, involved in mRNA degradation. Hydrolyzes single-stranded polyribonucleotides processively in the 3' to 5' direction. The polypeptide is Exoribonuclease 2 (Escherichia coli O8 (strain IAI1)).